Consider the following 247-residue polypeptide: tRNA (guanine-N(1)-)-methyltransferase (247 aa).

S-adenosyl-L-methionine is bound by residues Gly112 and 131 to 136 (LGDFVL).

Belongs to the RNA methyltransferase TrmD family. In terms of assembly, homodimer.

It localises to the cytoplasm. The enzyme catalyses guanosine(37) in tRNA + S-adenosyl-L-methionine = N(1)-methylguanosine(37) in tRNA + S-adenosyl-L-homocysteine + H(+). In terms of biological role, specifically methylates guanosine-37 in various tRNAs. This Syntrophotalea carbinolica (strain DSM 2380 / NBRC 103641 / GraBd1) (Pelobacter carbinolicus) protein is tRNA (guanine-N(1)-)-methyltransferase.